A 142-amino-acid chain; its full sequence is Hemoglobin subunit alpha (142 aa).

The Globin domain occupies 2 to 142 (VLSPADKSNV…VSTVLTSKYR (141 aa)). Position 4 is a phosphoserine (Ser-4). N6-succinyllysine occurs at positions 8 and 12. Lys-17 is modified (N6-acetyllysine; alternate). Lys-17 is modified (N6-succinyllysine; alternate). At Tyr-25 the chain carries Phosphotyrosine. Ser-36 carries the phosphoserine modification. Lys-41 bears the N6-succinyllysine mark. Ser-50 is subject to Phosphoserine. An O2-binding site is contributed by His-59. Residue His-88 coordinates heme b. Ser-103 is subject to Phosphoserine. Thr-109 carries the post-translational modification Phosphothreonine. A phosphoserine mark is found at Ser-125 and Ser-132. Thr-135 and Thr-138 each carry phosphothreonine. Position 139 is a phosphoserine (Ser-139).

It belongs to the globin family. Heterotetramer of two alpha chains and two beta chains. In terms of tissue distribution, red blood cells.

Its function is as follows. Involved in oxygen transport from the lung to the various peripheral tissues. Hemopressin acts as an antagonist peptide of the cannabinoid receptor CNR1. Hemopressin-binding efficiently blocks cannabinoid receptor CNR1 and subsequent signaling. The polypeptide is Hemoglobin subunit alpha (HBA) (Chlorocebus aethiops (Green monkey)).